Consider the following 584-residue polypeptide: FAD-linked oxidoreductase OXR2 (584 aa).

A signal peptide spans 1–22 (MRSIISAFILSLNFCTQPLVRG). N-linked (GlcNAc...) asparagine glycosylation is found at asparagine 75, asparagine 97, asparagine 115, asparagine 225, asparagine 302, asparagine 321, and asparagine 507. In terms of domain architecture, FAD-binding PCMH-type spans 128–310 (LGMLSEKYIA…LNATFKVEPV (183 aa)).

This sequence belongs to the oxygen-dependent FAD-linked oxidoreductase family. It depends on FAD as a cofactor.

It participates in secondary metabolite biosynthesis. FAD-linked oxidoreductase; part of the gene cluster that mediates the biosynthesis of a tyrosine-derived cytochalasan acting as a fungal signal recognized by resistant rice plants and leads to avirulence in Pi33 resistant rice cultivars. The first step in the pathway is catalyzed by the hybrid PKS-NRPS ACE1, assisted by the enoyl reductase RAP1, that are responsible for fusion of the tyrosine precursor and the polyketide backbone. The polyketide synthase module (PKS) of ACE1 is responsible for the synthesis of the polyketide backbone and the downstream nonribosomal peptide synthetase (NRPS) amidates the carboxyl end of the polyketide with the tyrosine precursor. Because ACE1 lacks a designated enoylreductase (ER) domain, the required activity is provided the enoyl reductase RAP1. Reduction by the hydrolyase ORFZ, followed by dehydration and intra-molecular Diels-Alder cyclization by the Diels-Alderase ORF3 then yield the required isoindolone-fused macrocycle. A number of oxidative steps catalyzed by the tailoring enzymes identified within the cluster, including cytochrome P450 monooxygenases CYP1 to CYP4, the FAD-linked oxidoreductase OXR2 and the short-chain dehydrogenase/reductase OXR1, are further required to afford the final cytochalasans that confer avirulence and which have still to be identified. The monooxygenase CYP1 has been shown to be a site-selective C-18 hydroxylase whereas the function of CYP3 is the site-selective epoxidation of the C-6/C-7 olefin that is present in some intermediate compounds. Finally, SYN2 and RAP2 are not required for avirulence in Pi33 resistant rice cultivars. The sequence is that of FAD-linked oxidoreductase OXR2 from Pyricularia oryzae (strain 70-15 / ATCC MYA-4617 / FGSC 8958) (Rice blast fungus).